Reading from the N-terminus, the 430-residue chain is Adenylosuccinate synthetase (430 aa).

Residues 12–18 and 40–42 contribute to the GTP site; these read GDEGKGK and GHT. The active-site Proton acceptor is D13. Residues D13 and G40 each coordinate Mg(2+). IMP contacts are provided by residues 13–16, 38–41, T130, R144, Q224, T239, and R303; these read DEGK and NAGH. H41 (proton donor) is an active-site residue. 299–305 contacts substrate; it reads VNTGRKR. GTP is bound by residues R305, 331–333, and 413–415; these read KLD and STS.

The protein belongs to the adenylosuccinate synthetase family. Homodimer. It depends on Mg(2+) as a cofactor.

The protein localises to the cytoplasm. It carries out the reaction IMP + L-aspartate + GTP = N(6)-(1,2-dicarboxyethyl)-AMP + GDP + phosphate + 2 H(+). It functions in the pathway purine metabolism; AMP biosynthesis via de novo pathway; AMP from IMP: step 1/2. Its function is as follows. Plays an important role in the de novo pathway of purine nucleotide biosynthesis. Catalyzes the first committed step in the biosynthesis of AMP from IMP. The chain is Adenylosuccinate synthetase from Rhodopseudomonas palustris (strain BisA53).